A 170-amino-acid polypeptide reads, in one-letter code: Large ribosomal subunit protein uL11 (170 aa).

It belongs to the universal ribosomal protein uL11 family. In terms of assembly, part of the ribosomal stalk of the 50S ribosomal subunit. Interacts with L10 and the large rRNA to form the base of the stalk. L10 forms an elongated spine to which L12 dimers bind in a sequential fashion forming a multimeric L10(L12)X complex.

Forms part of the ribosomal stalk which helps the ribosome interact with GTP-bound translation factors. This Saccharolobus islandicus (strain M.14.25 / Kamchatka #1) (Sulfolobus islandicus) protein is Large ribosomal subunit protein uL11.